Reading from the N-terminus, the 70-residue chain is FYYINPREFVNKKVCLDREKSSPFECGFDPLEFLSYPLFIRFFVITLIFLIFDVEIYLLLPMVYLNMSSP.

Residues 42 to 62 form a helical membrane-spanning segment; the sequence is FFVITLIFLIFDVEIYLLLPM.

This sequence belongs to the complex I subunit 3 family.

It is found in the mitochondrion membrane. The enzyme catalyses a ubiquinone + NADH + 5 H(+)(in) = a ubiquinol + NAD(+) + 4 H(+)(out). Functionally, core subunit of the mitochondrial membrane respiratory chain NADH dehydrogenase (Complex I) that is believed to belong to the minimal assembly required for catalysis. Complex I functions in the transfer of electrons from NADH to the respiratory chain. The immediate electron acceptor for the enzyme is believed to be ubiquinone. The polypeptide is NADH-ubiquinone oxidoreductase chain 3 (ND3) (Artemia salina (Brine shrimp)).